Here is a 526-residue protein sequence, read N- to C-terminus: MVWVFKSQFEGLSALKRGVHALTKAVTPAFGPRGYNVVIKKGKAPIVLTKNGIRIAKEIILQDAFESLGVKLAKEALLKVVEQTGDGSTTALVVIDALFTQGLKGIAAGLDPQEIKAGILLSVEMVYQQLQRQAIELQSPKDVLHVAMVAANHDVTLGTVVATVISQADLKGVFSSKDSGISKTRGLGKRVKSGYLSPYFVTRPETMDVVWEEALVLILSHSLVSLSEELIRYLELISEQNTHPLVIIAEDFDQNVLRTLILNKLRNGLPVCAVKAPGSRELRQVVLEDLAILTGATLIGQESENCEIPVSLDVLGRVKQVMITKETFTFLEGGGDAEIIQARKQELCLAIAGSTSESECQELEERLAIFIGSIPQVQITADTDTEQRERQFQLESALRATKAAMKGGIVPGGGVAFLRAAHAIEVPANLSSGMTFGFETLLQAVRTPLKVLAQNCGRSSEEVIHTILSHENPRFGYNGMTDTFEDLVDAGICDPLIVTTSSLKCAVSVSCLLLTSSFFISSRTKT.

ATP-binding residues include Lys50, Gly413, and Asp494.

This sequence belongs to the chaperonin (HSP60) family. In terms of assembly, forms a cylinder of 14 subunits composed of two heptameric rings stacked back-to-back. Interacts with the co-chaperonin GroES.

The protein resides in the cytoplasm. It catalyses the reaction ATP + H2O + a folded polypeptide = ADP + phosphate + an unfolded polypeptide.. Functionally, together with its co-chaperonin GroES, plays an essential role in assisting protein folding. The GroEL-GroES system forms a nano-cage that allows encapsulation of the non-native substrate proteins and provides a physical environment optimized to promote and accelerate protein folding. The sequence is that of Chaperonin GroEL 2 from Chlamydia pneumoniae (Chlamydophila pneumoniae).